We begin with the raw amino-acid sequence, 381 residues long: Spermidine/putrescine import ATP-binding protein PotA (381 aa).

The ABC transporter domain occupies 22-252; it reads VELRNVFKFF…PKTSFVADFI (231 aa). 54 to 61 contacts ATP; sequence GPSGCGKT.

The protein belongs to the ABC transporter superfamily. Spermidine/putrescine importer (TC 3.A.1.11.1) family. The complex is composed of two ATP-binding proteins (PotA), two transmembrane proteins (PotB and PotC) and a solute-binding protein (PotD).

It is found in the cell inner membrane. It carries out the reaction ATP + H2O + polyamine-[polyamine-binding protein]Side 1 = ADP + phosphate + polyamineSide 2 + [polyamine-binding protein]Side 1.. Its function is as follows. Part of the ABC transporter complex PotABCD involved in spermidine/putrescine import. Responsible for energy coupling to the transport system. This chain is Spermidine/putrescine import ATP-binding protein PotA, found in Nostoc sp. (strain PCC 7120 / SAG 25.82 / UTEX 2576).